The sequence spans 896 residues: MRHLIFTGFVLTLTALEAVNVAKSTDNDIVLKVSTEKHSSRDSHHFSGEWLESPWGDLYQFRAGDQNWLTAREHCLSLNADLAAIRNVEQLDWILSHYAPLSSRFAQRLVQIGLYAPEGQTHEWKWLNGNEINKTLLWSSGEPYDHSMEGRERCGLLNVEKRVLDDVDCESTSPDHHAQRYICQRTSENHKQQQRSNNYIWQKIENLFSFFGIGGSPTPHNATIPNDYEDEVLKNETSATVKSTVKFSDSEEETSSEEEESVSKTLAALPKIEGSGESTALKELQEPEGSGQIVEKKAIETTGDLVSGVDEEKLDKMINKMEEMIKSIDDLTVPPAVLERTTVSTVVLKKEEIVKQEKTDEKKVEDKKETLANELNDNKISESIEGDFDQAQSKDMPKADIEPPKEEDCDEEGSGSGSGEEDEKDESSEKIELAPEKEDKIKEFLGVLRLFLDRAEHGDLRKLLDDQSGKTLLERMKNAVREANRREFEMLEKLENSKKSEEEKEELAKKDQMSTEEQKDLYKKISSAVMKAAKIHKIEEADKVQDEQAMEKFNIAKVKADSEEAESEGTVEVLKSAKEGKAEIKEKVGNDDYYGDYLDDNNVIKIQNREKKDAKEESSSDDKKSTDEKKKEIKKIEKTNKVNHDEPKKEEKKNEEQVKETKLESSTTVAKKEDVTTVASTTEEPKSDKDSEGSGSDIEESTVSSAKPAEAEENEAELEASGHEEVSTTTESTTVAVKEVPVDEIEKIAKLEAKQHTEDEKVTVETKQETAVTPAPTTSEKTSTTAAPSTKPAEETTTTTEAPSTTTKPVTVAVKKVSPEEMEKLVKKESTEKVTLLPPLPTFTFPTLAPFTFPTLPTLATTKPSPAPKVPTLEEILGNLNDQFKKLLSPPKPLPK.

Residues 1–18 (MRHLIFTGFVLTLTALEA) form the signal peptide. In terms of domain architecture, C-type lectin spans 54-178 (PWGDLYQFRA…CESTSPDHHA (125 aa)). Asparagine 133 carries an N-linked (GlcNAc...) asparagine glycan. Cysteine 154 and cysteine 169 form a disulfide bridge. Asparagine 221 and asparagine 235 each carry an N-linked (GlcNAc...) asparagine glycan. Disordered stretches follow at residues 243–264 (STVK…SVSK), 354–436 (VKQE…LAPE), 492–519 (EKLE…EEQK), and 557–809 (KVKA…TTKP). Acidic residues predominate over residues 250–260 (SEEETSSEEEE). Basic and acidic residues-rich tracts occupy residues 354–382 (VKQE…KISE) and 395–406 (DMPKADIEPPKE). Residues 407 to 426 (EDCDEEGSGSGSGEEDEKDE) are compositionally biased toward acidic residues. The span at 427–436 (SSEKIELAPE) shows a compositional bias: basic and acidic residues. Basic and acidic residues-rich tracts occupy residues 575 to 590 (KSAK…KVGN), 607 to 663 (QNRE…ETKL), and 683 to 692 (EEPKSDKDSE). The span at 727–739 (STTTESTTVAVKE) shows a compositional bias: low complexity. Positions 740-768 (VPVDEIEKIAKLEAKQHTEDEKVTVETKQ) are enriched in basic and acidic residues. A compositionally biased stretch (low complexity) spans 773–809 (TPAPTTSEKTSTTAAPSTKPAEETTTTTEAPSTTTKP).

Its subcellular location is the secreted. The sequence is that of C-type lectin domain-containing protein 180 (clec-180) from Caenorhabditis elegans.